The following is a 274-amino-acid chain: 3-methyl-2-oxobutanoate hydroxymethyltransferase (274 aa).

Residues Asp-44 and Asp-83 each coordinate Mg(2+). Residues 44–45, Asp-83, and Lys-113 each bind 3-methyl-2-oxobutanoate; that span reads DS. Position 115 (Glu-115) interacts with Mg(2+). Catalysis depends on Glu-182, which acts as the Proton acceptor.

This sequence belongs to the PanB family. As to quaternary structure, homodecamer; pentamer of dimers. It depends on Mg(2+) as a cofactor.

It localises to the cytoplasm. The enzyme catalyses 3-methyl-2-oxobutanoate + (6R)-5,10-methylene-5,6,7,8-tetrahydrofolate + H2O = 2-dehydropantoate + (6S)-5,6,7,8-tetrahydrofolate. It participates in cofactor biosynthesis; (R)-pantothenate biosynthesis; (R)-pantoate from 3-methyl-2-oxobutanoate: step 1/2. In terms of biological role, catalyzes the reversible reaction in which hydroxymethyl group from 5,10-methylenetetrahydrofolate is transferred onto alpha-ketoisovalerate to form ketopantoate. The chain is 3-methyl-2-oxobutanoate hydroxymethyltransferase from Campylobacter jejuni (strain RM1221).